Here is a 250-residue protein sequence, read N- to C-terminus: Large ribosomal subunit protein uL4 (250 aa).

2 disordered regions span residues 1 to 20 (MQVTVRDLDGDDAGTLDLPR) and 51 to 101 (YAGL…HGLD). Basic and acidic residues predominate over residues 92-101 (PKAEKDHGLD).

This sequence belongs to the universal ribosomal protein uL4 family. In terms of assembly, part of the 50S ribosomal subunit.

In terms of biological role, one of the primary rRNA binding proteins, this protein initially binds near the 5'-end of the 23S rRNA. It is important during the early stages of 50S assembly. It makes multiple contacts with different domains of the 23S rRNA in the assembled 50S subunit and ribosome. Forms part of the polypeptide exit tunnel. This chain is Large ribosomal subunit protein uL4, found in Halobacterium salinarum (strain ATCC 29341 / DSM 671 / R1).